The following is a 257-amino-acid chain: tRNA (guanine-N(1)-)-methyltransferase (257 aa).

S-adenosyl-L-methionine is bound by residues G117 and 137-142 (LGDFVL).

The protein belongs to the RNA methyltransferase TrmD family. In terms of assembly, homodimer.

It is found in the cytoplasm. The catalysed reaction is guanosine(37) in tRNA + S-adenosyl-L-methionine = N(1)-methylguanosine(37) in tRNA + S-adenosyl-L-homocysteine + H(+). Functionally, specifically methylates guanosine-37 in various tRNAs. The chain is tRNA (guanine-N(1)-)-methyltransferase from Bordetella pertussis (strain Tohama I / ATCC BAA-589 / NCTC 13251).